We begin with the raw amino-acid sequence, 130 residues long: MDKLFLEIVTPEGEIFANDVKSVQVPGCEGEFGILPRHATLVTTLNAGVIEVINLDGTKDMIAIDDGGCIKVAEDKTTILANGAVYIGGSNESEIAISLQKAKELVKSMSSNTIVYATTIAKIDEQVRQK.

It belongs to the ATPase epsilon chain family. In terms of assembly, F-type ATPases have 2 components, CF(1) - the catalytic core - and CF(0) - the membrane proton channel. CF(1) has five subunits: alpha(3), beta(3), gamma(1), delta(1), epsilon(1). CF(0) has three main subunits: a, b and c.

It is found in the cell inner membrane. Produces ATP from ADP in the presence of a proton gradient across the membrane. This Campylobacter hominis (strain ATCC BAA-381 / DSM 21671 / CCUG 45161 / LMG 19568 / NCTC 13146 / CH001A) protein is ATP synthase epsilon chain.